A 426-amino-acid chain; its full sequence is MRSYPAIPRIYAETTLNMLLKRAKKPRVHSIDEYLKDGGYQALEKALNMSPEEIIDWVDKSTLRGRGGAGFPTGKKWKFAVQNPGPRYFICNADESEPGTFKDRIIIERDPHLLIEGIIISSYAIGANEAYIYIRGEYPAGYYILRDAIEEAKKKGFLGKNILGSGFDLEIYVARGAGAYICGEETALIESLEGKRGHPRLKPPYPVQKGLWGKPTVVNNVETIANVPFIISMGWEEYRYIGPSDYAGPKLFPVSGKVKKPGVYELPMNTTLREVIFKYAGGTLGNKKVKAVFSGALDCFSSEELDIPMDYSPLGFGGTGTVIVLTEEDDIVEAALKIAEFYEHETCGQCTPCRVGCYEQANLLEKIYKGEATEQDWEGFDFVNRNIQPTSICGLGAVAGRLIRQTLEKFPEEWEKYRKKSASLPL.

Residue 65-74 participates in NAD(+) binding; that stretch reads GRGGAGFPTG. 176–223 contributes to the FMN binding site; sequence GAGAYICGEETALIESLEGKRGHPRLKPPYPVQKGLWGKPTVVNNVET. [4Fe-4S] cluster contacts are provided by Cys-347, Cys-350, Cys-353, and Cys-393.

It belongs to the complex I 51 kDa subunit family. The cofactor is FMN. [4Fe-4S] cluster is required as a cofactor.

It carries out the reaction a quinone + NADH + 5 H(+)(in) = a quinol + NAD(+) + 4 H(+)(out). Its function is as follows. NDH-1 shuttles electrons from NADH, via FMN and iron-sulfur (Fe-S) centers, to quinones in the respiratory chain. Couples the redox reaction to proton translocation (for every two electrons transferred, four hydrogen ions are translocated across the cytoplasmic membrane), and thus conserves the redox energy in a proton gradient. This chain is NADH-quinone oxidoreductase subunit F (nuoF), found in Aquifex aeolicus (strain VF5).